A 468-amino-acid polypeptide reads, in one-letter code: H(+)/Cl(-) exchange transporter ClcA (468 aa).

The Cytoplasmic portion of the chain corresponds to Met1–Pro30. The chain crosses the membrane as a helical span at residues Phe31–Lys67. Residues Ser68–Leu74 lie on the Periplasmic side of the membrane. Residues Pro75–Phe98 traverse the membrane as a helical segment. A Selectivity filter part_1 motif is present at residues Gly104–Pro108. Ser105 lines the chloride pocket. Positions Ile107–Met114 form an intramembrane region, helical. Residues Asp115 to Arg121 lie on the Cytoplasmic side of the membrane. A run of 2 helical transmembrane segments spans residues Trp122–Ser139 and Glu146–Phe164. The Selectivity filter part_2 motif lies at Gly144 to Pro148. The Cytoplasmic portion of the chain corresponds to Arg165–Ser174. 2 consecutive intramembrane regions (helical) follow at residues Leu175 to Ala187 and Pro191 to Ile199. Residues Glu200–Ser212 lie on the Cytoplasmic side of the membrane. A helical transmembrane segment spans residues Val213–Ile230. The Periplasmic portion of the chain corresponds to Asn231 to Leu250. The helical transmembrane segment at Gly251 to Val279 threads the bilayer. The Cytoplasmic segment spans residues Lys280–Asp285. A helical membrane pass occupies residues Arg286–Val307. The Periplasmic portion of the chain corresponds to Pro308 to Gly327. The next 2 helical transmembrane spans lie at Ala328–Gly347 and Gly353–Lys374. The Selectivity filter part_3 signature appears at Gly353 to Pro357. Residues Ile354 and Phe355 each contribute to the chloride site. Over Met375–Pro384 the chain is Periplasmic. Positions Gly385–Thr399 form an intramembrane region, helical. An intramembrane region (note=Loop between two helices) is located at residues Val400–Ala402. An intramembrane region (helical) is located at residues Pro403–Thr414. The segment at residues Asn415–Leu419 is an intramembrane region (note=Loop between two helices). A helical transmembrane segment spans residues Ile420–Leu436. The Cytoplasmic segment spans residues Leu437–Ser468. Tyr443 lines the chloride pocket.

The protein belongs to the chloride channel (TC 2.A.49) family. ClcA subfamily. As to quaternary structure, homodimer.

The protein resides in the cell inner membrane. It carries out the reaction 2 chloride(in) + H(+)(out) = 2 chloride(out) + H(+)(in). In terms of biological role, proton-coupled chloride transporter. Functions as antiport system and exchanges two chloride ions for 1 proton. Probably acts as an electrical shunt for an outwardly-directed proton pump that is linked to amino acid decarboxylation, as part of the extreme acid resistance (XAR) response. This Vibrio cholerae serotype O1 (strain ATCC 39315 / El Tor Inaba N16961) protein is H(+)/Cl(-) exchange transporter ClcA.